Here is a 136-residue protein sequence, read N- to C-terminus: Plastocyanin (136 aa).

Residues 1 to 34 (MSLVFNLVKRLQLILLSLVVGGLAVAFLSNPAAA) form the signal peptide. Residues 35–136 (ETYIVKMGSD…GMVGKIIVNG (102 aa)) enclose the Plastocyanin-like domain. Residues His-73, Cys-120, His-123, and Met-128 each contribute to the Cu cation site.

It belongs to the plastocyanin family. The cofactor is Cu(2+).

It is found in the cellular thylakoid membrane. Participates in electron transfer between P700 and the cytochrome b6-f complex in photosystem I. The polypeptide is Plastocyanin (Synechococcus sp. (strain JA-2-3B'a(2-13)) (Cyanobacteria bacterium Yellowstone B-Prime)).